Reading from the N-terminus, the 342-residue chain is WW domain binding protein 1-like (342 aa).

Residues 42–62 (LWWFWLVWTIIIILSCCCVCH) form a helical membrane-spanning segment. 2 disordered regions span residues 133–247 (LPPQ…RRFT) and 292–320 (PGDE…RPPA). Residues 158–173 (SSPLSEPSRSSTRPPS) are compositionally biased toward low complexity. Serine 173 carries the post-translational modification Phosphoserine. The segment covering 212–240 (LDKDAECREELLKDDSSEHGAPDSKEKTP) has biased composition (basic and acidic residues).

The protein resides in the membrane. This chain is WW domain binding protein 1-like (WBP1L), found in Homo sapiens (Human).